Consider the following 120-residue polypeptide: MVKLTSIAAGVAAIAATASATTTLAQSDERVNLVELGVYVSDIRAHLAQYYMFQAAHPTETYPVEVAEAVFNYGDFTTMLTGIAPDQVTRMITGVPWYSSRLKPAISSALSKVGIYTIAN.

The first 20 residues, 1-20, serve as a signal peptide directing secretion; it reads MVKLTSIAAGVAAIAATASA.

Belongs to the SRP1/TIP1 family. Seripauperin subfamily.

The sequence is that of Seripauperin-10 (PAU10) from Saccharomyces cerevisiae (strain ATCC 204508 / S288c) (Baker's yeast).